Here is an 873-residue protein sequence, read N- to C-terminus: DNA mismatch repair protein MutS (873 aa).

628–635 (GPNMAGKS) lines the ATP pocket.

The protein belongs to the DNA mismatch repair MutS family.

Its function is as follows. This protein is involved in the repair of mismatches in DNA. It is possible that it carries out the mismatch recognition step. This protein has a weak ATPase activity. This is DNA mismatch repair protein MutS from Chlorobium chlorochromatii (strain CaD3).